The chain runs to 382 residues: MKSGVIPSSAVGQKINEWYRYIRTFSVPDAEVLKAEIQQELKHMQHDSNLLLYYSLMEFRHQLMLDYLEPLEKLNIEDQPSLSELSRNIDSNQADLKGLLDYYVNFFRGMYEFDKREFISAITYYKQAEKKLSFVADHIERAEFYFKIAEAYYYMKQTYFSLINIKNAYEIYVEQETYNVRIIQCHFVFGVNLMDERNFEQAARHFKLALNMAQAEQKAQLVGRAYYNLGLCYYNQDLLDPAIDYFEKAVSTFESSRIVNSLPQAYFLITLIYYKQGKHDKASEYHKRGYEYAKETDDADYAVKFEFLQSLYLDQPNEEGIERCFQYLKNKNMYADIEDLALEVAKYYYEQKWFKLSASYFLQVEEARKQIQRSEGLYEIEI.

TPR repeat units lie at residues 102–138 (YYVNFFRGMYEFDKREFISAITYYKQAEKKLSFVADH), 149–182 (AEAYYYMKQTYFSLINIKNAYEIYVEQETYNVRI), 183–216 (IQCHFVFGVNLMDERNFEQAARHFKLALNMAQAE), 223–256 (GRAYYNLGLCYYNQDLLDPAIDYFEKAVSTFESS), and 263–296 (PQAYFLITLIYYKQGKHDKASEYHKRGYEYAKET).

The protein belongs to the Rap family. In terms of assembly, homodimer. Interacts specifically with the C-terminal DNA-binding domain of ComA. Interacts with CSF.

It localises to the cytoplasm. With respect to regulation, inhibited by the competence and sporulation stimulating factor (CSF), encoded by phrC, which prevents RapC-ComA interaction. Functionally, involved in the regulation of genetic competence development. Inhibits the activity of ComA, a transcriptional factor that regulates the development of genetic competence. Acts by binding to ComA, independently of its phosphorylation state, leading to the inhibition of ComA DNA-binding activity. Does not dephosphorylate phospho-ComA and does not affect the phosphorylation level of the ComP-ComA system. The polypeptide is Regulatory protein RapC (rapC) (Bacillus subtilis (strain 168)).